The chain runs to 163 residues: Putative pre-16S rRNA nuclease (163 aa).

Belongs to the YqgF nuclease family.

Its subcellular location is the cytoplasm. In terms of biological role, could be a nuclease involved in processing of the 5'-end of pre-16S rRNA. The polypeptide is Putative pre-16S rRNA nuclease (Rhizobium leguminosarum bv. trifolii (strain WSM2304)).